Reading from the N-terminus, the 512-residue chain is Gamma-aminobutyric acid receptor subunit beta-2 (512 aa).

The first 25 residues, 1-25 (MWRVRKRGYFGIWSFPLIIAAVCAQ), serve as a signal peptide directing secretion. Topologically, residues 26 to 244 (SVNDPSNMSL…SFKLKRNIGY (219 aa)) are extracellular. N-linked (GlcNAc...) asparagine glycans are attached at residues asparagine 32 and asparagine 104. Tyrosine 121 is a binding site for histamine. A disulfide bond links cysteine 160 and cysteine 174. Residue asparagine 173 is glycosylated (N-linked (GlcNAc...) asparagine). Residues 180–181 (SY) and threonine 226 each bind histamine. Residues tyrosine 181 and threonine 226 each coordinate 4-aminobutanoate. The next 3 membrane-spanning stretches (helical) occupy residues 245 to 266 (FILQ…SFWI), 270 to 292 (ASAA…NTHL), and 304 to 326 (AIDM…YALV). The Cytoplasmic segment spans residues 327-489 (NYIFFGRGPQ…DLTDVNAIDR (163 aa)). A Phosphotyrosine modification is found at tyrosine 441. Residues 490–511 (WSRIFFPVVFSFFNIVYWLYYV) traverse the membrane as a helical segment.

It belongs to the ligand-gated ion channel (TC 1.A.9) family. Gamma-aminobutyric acid receptor (TC 1.A.9.5) subfamily. GABRB2 sub-subfamily. In terms of assembly, heteropentamer, formed by a combination of alpha (GABRA1-6), beta (GABRB1-3), gamma (GABRG1-3), delta (GABRD), epsilon (GABRE), rho (GABRR1-3), pi (GABRP) and theta (GABRQ) chains, each subunit exhibiting distinct physiological and pharmacological properties. Interacts with UBQLN1. May interact with KIF21B. Identified in a complex of 720 kDa composed of LHFPL4, NLGN2, GABRA1, GABRB2, GABRG2 and GABRB3. Glycosylated.

The protein localises to the postsynaptic cell membrane. It is found in the cell membrane. The protein resides in the cytoplasmic vesicle. It catalyses the reaction chloride(in) = chloride(out). Its activity is regulated as follows. Allosterically activated by benzodiazepines and the anesthetic etomidate. Inhibited by the antagonist bicuculline. Potentiated by histamine. Beta subunit of the heteropentameric ligand-gated chloride channel gated by gamma-aminobutyric acid (GABA), a major inhibitory neurotransmitter in the brain. GABA-gated chloride channels, also named GABA(A) receptors (GABAAR), consist of five subunits arranged around a central pore and contain GABA active binding site(s) located at the alpha and beta subunit interface(s). When activated by GABA, GABAARs selectively allow the flow of chloride anions across the cell membrane down their electrochemical gradient. Chloride influx into the postsynaptic neuron following GABAAR opening decreases the neuron ability to generate a new action potential, thereby reducing nerve transmission. GABAARs containing alpha-1 and beta-2 or -3 subunits exhibit synaptogenic activity; the gamma-2 subunit being necessary but not sufficient to induce rapid synaptic contacts formation. Extrasynaptic beta-2 receptors contribute to the tonic GABAergic inhibition. Beta-containing GABAARs can simultaneously bind GABA and histamine where histamine binds at the interface of two neighboring beta subunits, which may be involved in the regulation of sleep and wakefulness. The sequence is that of Gamma-aminobutyric acid receptor subunit beta-2 from Mus musculus (Mouse).